Here is a 211-residue protein sequence, read N- to C-terminus: Protein-methionine-sulfoxide reductase heme-binding subunit MsrQ (211 aa).

4 consecutive transmembrane segments (helical) span residues 17–37 (LAGL…GLGA), 82–102 (LWCF…ELGV), 116–136 (PYLT…FTST), and 153–173 (FVYL…KIIS).

Belongs to the MsrQ family. As to quaternary structure, heterodimer of a catalytic subunit (MsrP) and a heme-binding subunit (MsrQ). Requires FMN as cofactor. Heme b serves as cofactor.

The protein localises to the cell inner membrane. In terms of biological role, part of the MsrPQ system that repairs oxidized periplasmic proteins containing methionine sulfoxide residues (Met-O), using respiratory chain electrons. Thus protects these proteins from oxidative-stress damage caused by reactive species of oxygen and chlorine generated by the host defense mechanisms. MsrPQ is essential for the maintenance of envelope integrity under bleach stress, rescuing a wide series of structurally unrelated periplasmic proteins from methionine oxidation, including the primary periplasmic chaperone SurA and the lipoprotein Pal. MsrQ provides electrons for reduction to the reductase catalytic subunit MsrP, using the quinone pool of the respiratory chain. This Shigella boydii serotype 18 (strain CDC 3083-94 / BS512) protein is Protein-methionine-sulfoxide reductase heme-binding subunit MsrQ.